Reading from the N-terminus, the 268-residue chain is UPF0719 transmembrane protein aq_1349 (268 aa).

The next 8 helical transmembrane spans lie at 5–24 (LIAL…LFFR), 37–59 (NLAL…YSVY), 69–91 (LYLI…IFLR), 104–126 (AGAG…ASFW), 130–152 (SFIL…LFIS), 173–195 (FSAS…GAIS), 210–232 (VLYF…FLLF), and 245–267 (NLSA…LAVM).

It belongs to the UPF0719 family.

The protein localises to the cell membrane. The chain is UPF0719 transmembrane protein aq_1349 from Aquifex aeolicus (strain VF5).